Here is a 133-residue protein sequence, read N- to C-terminus: CDGSH iron-sulfur domain-containing protein 2 homolog (133 aa).

Residues 1–35 (MEPISHLVKSSLPNYLSSLPVPDSIGGWFKLSFKD) lie on the Lumenal side of the membrane. Residues 36–58 (WLALIPPTVVVAGIGYTAYLAYC) form a helical membrane-spanning segment. Residues 59–133 (PAARASCSAK…DNVGPIVIKK (75 aa)) lie on the Cytoplasmic side of the membrane. Positions 100, 102, 111, and 115 each coordinate [2Fe-2S] cluster.

This sequence belongs to the CISD protein family. CISD2 subfamily. [2Fe-2S] cluster serves as cofactor.

It is found in the endoplasmic reticulum membrane. This chain is CDGSH iron-sulfur domain-containing protein 2 homolog, found in Drosophila sechellia (Fruit fly).